The primary structure comprises 372 residues: Glutamate 5-kinase (372 aa).

Residue Lys-14 coordinates ATP. Substrate is bound by residues Ser-54, Asp-141, and Asn-153. ATP is bound by residues 173-174 and 215-221; these read TD and TGGMITK. Positions 280–358 constitute a PUA domain; sequence AGRLLLDDGA…REIEAALGYI (79 aa).

The protein belongs to the glutamate 5-kinase family.

It localises to the cytoplasm. It carries out the reaction L-glutamate + ATP = L-glutamyl 5-phosphate + ADP. Its pathway is amino-acid biosynthesis; L-proline biosynthesis; L-glutamate 5-semialdehyde from L-glutamate: step 1/2. Functionally, catalyzes the transfer of a phosphate group to glutamate to form L-glutamate 5-phosphate. This chain is Glutamate 5-kinase, found in Chromobacterium violaceum (strain ATCC 12472 / DSM 30191 / JCM 1249 / CCUG 213 / NBRC 12614 / NCIMB 9131 / NCTC 9757 / MK).